The chain runs to 1241 residues: ATP-dependent helicase/nuclease subunit A (1241 aa).

The UvrD-like helicase ATP-binding domain occupies 12–485 (SQWTDDQWKA…IDLAKNFRSR (474 aa)). 33 to 40 (AAAGSGKT) lines the ATP pocket. The UvrD-like helicase C-terminal domain occupies 505–805 (GEIDYDADAE…RIMTIHKSKG (301 aa)).

This sequence belongs to the helicase family. AddA subfamily. As to quaternary structure, heterodimer of AddA and AddB/RexB. Mg(2+) is required as a cofactor.

The catalysed reaction is Couples ATP hydrolysis with the unwinding of duplex DNA by translocating in the 3'-5' direction.. It carries out the reaction ATP + H2O = ADP + phosphate + H(+). Its function is as follows. The heterodimer acts as both an ATP-dependent DNA helicase and an ATP-dependent, dual-direction single-stranded exonuclease. Recognizes the chi site generating a DNA molecule suitable for the initiation of homologous recombination. The AddA nuclease domain is required for chi fragment generation; this subunit has the helicase and 3' -&gt; 5' nuclease activities. This chain is ATP-dependent helicase/nuclease subunit A, found in Bacillus cereus (strain ATCC 10987 / NRS 248).